Consider the following 381-residue polypeptide: PqqA peptide cyclase (381 aa).

One can recognise a Radical SAM core domain in the interval 12–228; the sequence is VGPPLWLLAE…AEYRQRLAAE (217 aa). [4Fe-4S] cluster-binding residues include Cys-26, Cys-30, and Cys-33.

Belongs to the radical SAM superfamily. PqqE family. In terms of assembly, interacts with PqqD. The interaction is necessary for activity of PqqE. Requires [4Fe-4S] cluster as cofactor.

It carries out the reaction [PQQ precursor protein] + S-adenosyl-L-methionine = E-Y cross-linked-[PQQ precursor protein] + 5'-deoxyadenosine + L-methionine + H(+). The protein operates within cofactor biosynthesis; pyrroloquinoline quinone biosynthesis. Catalyzes the cross-linking of a glutamate residue and a tyrosine residue in the PqqA protein as part of the biosynthesis of pyrroloquinoline quinone (PQQ). The protein is PqqA peptide cyclase of Pseudomonas aeruginosa (strain LESB58).